A 92-amino-acid polypeptide reads, in one-letter code: CRISPR-associated endoribonuclease Cas2 2 (92 aa).

Asp-12 contacts Mg(2+).

This sequence belongs to the CRISPR-associated endoribonuclease Cas2 protein family. Homodimer, forms a heterotetramer with a Cas1 homodimer. Requires Mg(2+) as cofactor.

In terms of biological role, CRISPR (clustered regularly interspaced short palindromic repeat), is an adaptive immune system that provides protection against mobile genetic elements (viruses, transposable elements and conjugative plasmids). CRISPR clusters contain sequences complementary to antecedent mobile elements and target invading nucleic acids. CRISPR clusters are transcribed and processed into CRISPR RNA (crRNA). Functions as a ssRNA-specific endoribonuclease. Involved in the integration of spacer DNA into the CRISPR cassette. The polypeptide is CRISPR-associated endoribonuclease Cas2 2 (cas22) (Archaeoglobus fulgidus (strain ATCC 49558 / DSM 4304 / JCM 9628 / NBRC 100126 / VC-16)).